Consider the following 110-residue polypeptide: UPF0122 protein spr1167 (110 aa).

This sequence belongs to the UPF0122 family.

Might take part in the signal recognition particle (SRP) pathway. This is inferred from the conservation of its genetic proximity to ftsY/ffh. May be a regulatory protein. This is UPF0122 protein spr1167 from Streptococcus pneumoniae (strain ATCC BAA-255 / R6).